A 995-amino-acid polypeptide reads, in one-letter code: Meckelin (995 aa).

The N-terminal stretch at Met1 to Ala36 is a signal peptide. The interval Gln37–Gly280 is cysteine-rich. Over Gln37–Glu519 the chain is Extracellular. Disulfide bonds link Cys49/Cys62, Cys65/Cys78, Cys80/Cys97, Cys100/Cys114, Cys117/Cys127, Cys129/Cys150, Cys153/Cys170, Cys173/Cys184, Cys186/Cys197, Cys237/Cys246, and Cys253/Cys268. Asn141 carries an N-linked (GlcNAc...) asparagine glycan. N-linked (GlcNAc...) asparagine glycosylation is present at Asn179. A glycan (N-linked (GlcNAc...) asparagine) is linked at Asn242. Asn318 carries an N-linked (GlcNAc...) asparagine glycan. Cys357 and Cys378 form a disulfide bridge. A helical transmembrane segment spans residues Ala520–Arg548. Residues Arg549–Gln558 lie on the Cytoplasmic side of the membrane. The chain crosses the membrane as a helical span at residues Thr559–Phe590. Over Lys591–Pro603 the chain is Extracellular. A helical membrane pass occupies residues Ile604–Gln631. Over Ile632–Thr670 the chain is Cytoplasmic. The helical intramembrane region spans Tyr671–Glu679. The discontinuously helical transmembrane segment at Tyr671 to Val701 threads the bilayer. The stretch at Ile680–Ser688 is an intramembrane region. Residues Leu689–Val701 constitute an intramembrane region (helical). Residues Val702–Leu731 are Extracellular-facing. An intramembrane region (helical) is located at residues Arg732–Arg757. Residues Arg732–Ser771 form a discontinuously helical membrane-spanning segment. Residues Phe758–Lys762 lie within the membrane without spanning it. The segment at residues Ile763–Ser771 is an intramembrane region (helical). At Met772–Ser926 the chain is on the cytoplasmic side. Positions Gly828–Ser917 form a coiled coil. Positions Phe927–Ser929 form an intramembrane region, helical. A discontinuously helical transmembrane segment spans residues Phe927 to Leu952. Residues Val930–Glu936 lie within the membrane without spanning it. The segment at residues Ala937 to Leu952 is an intramembrane region (helical). Residues Ala953–Phe957 are Extracellular-facing. The chain crosses the membrane as a helical span at residues Ile958 to Ser985. At Lys986–Ile995 the chain is on the cytoplasmic side.

As to quaternary structure, homodimer. Part of the tectonic-like complex (also named B9 complex). Interacts with DNAJB9, DNAJC10 and mutated SFTPC. Interacts with SYNE2 during the early establishment of cell polarity. Interacts (via C-terminus) with FLNA. Interacts with TMEM218. Interacts with WNT5A. Interacts with ROR2. In terms of tissue distribution, widely expressed in adult and fetal tissues. Expressed at higher level in spinal cord.

The protein resides in the cell membrane. It is found in the endoplasmic reticulum membrane. It localises to the cell projection. The protein localises to the cilium. Its subcellular location is the cytoplasm. The protein resides in the cytoskeleton. It is found in the cilium basal body. Required for ciliary structure and function. Part of the tectonic-like complex which is required for tissue-specific ciliogenesis and may regulate ciliary membrane composition. Involved in centrosome migration to the apical cell surface during early ciliogenesis. Involved in the regulation of cilia length and appropriate number through the control of centrosome duplication. Is a key regulator of stereociliary bundle orientation. Required for epithelial cell branching morphology. Essential for endoplasmic reticulum-associated degradation (ERAD) of surfactant protein C (SFTPC). Involved in the negative regulation of canonical Wnt signaling, and activation of the non-canonical cascade stimulated by WNT5A. In non-canonical Wnt signaling, it may act as ROR2 coreceptor. The chain is Meckelin (TMEM67) from Homo sapiens (Human).